We begin with the raw amino-acid sequence, 1732 residues long: Transient receptor potential cation channel subfamily M member 3 (1732 aa).

Topologically, residues Met1–Pro894 are cytoplasmic. Calmodulin-binding stretches follow at residues Asn192–Gly215, Thr300–Asn323, Arg601–Gly624, and Arg793–Lys816. The segment at Pro617–Met625 is required for the inhibitory action of G-beta/gamma-subunits of heterotrimeric G-proteins. 1,2-dioctanoyl-sn-glycero-3-phospho-(1D-myo-inositol-4,5-bisphosphate) is bound at residue Ser796. The helical transmembrane segment at Ile895–Val918 threads the bilayer. Over Lys919–Ser925 the chain is Extracellular. Residues Thr926–Met948 form a helical membrane-spanning segment. Residues Ser949–Glu964 are Cytoplasmic-facing. A helical membrane pass occupies residues Tyr965 to Leu985. Residues Gln986–Pro989 are Extracellular-facing. Residues Phe990 to Phe1013 form a helical membrane-spanning segment. The Cytoplasmic portion of the chain corresponds to Gly1014–Lys1028. Residues Lys1017 and Tyr1018 each coordinate 1,2-dioctanoyl-sn-glycero-3-phospho-(1D-myo-inositol-4,5-bisphosphate). A helical transmembrane segment spans residues Met1029–Phe1056. Residues Pro1057 to Ala1111 lie on the Extracellular side of the membrane. Residues Trp1112–Phe1137 form a helical membrane-spanning segment. Residues Asn1138–Asn1732 are Cytoplasmic-facing. The stretch at Glu1241–Ala1301 forms a coiled coil. Positions Pro1459–Thr1476 are enriched in low complexity. 2 disordered regions span residues Pro1459–Arg1478 and Arg1611–Asn1732. Composition is skewed to polar residues over residues Ala1635 to Thr1653, Asn1690 to Ser1701, and Arg1720 to Asn1732.

The protein belongs to the transient receptor (TC 1.A.4) family. LTrpC subfamily. TRPM3 sub-subfamily. In terms of assembly, homotetramer. Interacts with TRPM1; the interaction results in the formation of a heteromultimeric cation channel complex that are functionally different from the homomeric channels. Expressed primarily in the kidney and, at lower levels, in brain, testis, ovary, pancreas and spinal cord. Expression in the brain and kidney was determined at protein level. In the kidney, expressed predominantly in the collecting tubular epithelium in the medulla, medullary rays, and periglomerular regions; in the brain, highest levels are found in the cerebellum, choroid plexus, the locus coeruleus, the posterior thalamus and the substantia nigra. Down-regulated in renal tumors compared to normal kidney. Expressed in the lens.

The protein localises to the cell membrane. It carries out the reaction Ca(2+)(in) = Ca(2+)(out). It catalyses the reaction Mn(2+)(in) = Mn(2+)(out). The catalysed reaction is Zn(2+)(in) = Zn(2+)(out). The enzyme catalyses Mg(2+)(in) = Mg(2+)(out). With respect to regulation, activated by the neurosteroid pregnelonone sulfate (PregS); PregS activates the channel by shifting its current-voltage activation curve toward more negative membrane potentials and also potentiates temperature-induced activation. Activated by sphingosine. Activated by heat. Intracellular Ca(2+) inhibits TRPM3 probably via interaction with Ca(2+)/calmodulin. Intracellular Mg(2+) inhibits TRPM3 activity. Both intracellular and extracellular protons block TRPM3 through propable binding sites in the pore region. Positively regulated by phosphoinositide phosphoinositol 4,5-biphosphate (PI(4,5)P2). Strongly inhibited by activation of G(i)-coupled receptors via direct binding with G-betagamma-subunits of heterotrimeric G-proteins. Its function is as follows. Constitutively active, non-selective divalent cation-conducting channel that is permeable to Ca(2+), Mn(2+), and Mg(2+), with a high permeability for Ca(2+). However, can be enhanced by increasing temperature and by ligands, including the endogenous neurosteroid pregnenolone sulfate and sphingosine-1 and suppressed by intracellular Mg(2+). Implicated in a variety of cellular processes, including insulin/peptide secretion, vascular constriction and dilation, noxious heat sensing, inflammatory and spontaneous pain sensitivity. In neurons of the dorsal root ganglia, functions as thermosensitive channel for the detection of noxious heat and spontaneous pain. Suggested to function as an ionotropic steroid receptor in beta-cell, indeed pregnenolone sulfate leads to Ca(2+) influx and enhanced insulin secretion. Mediates Zn(2+) uptake into the lumen of pancreatic beta cell secretory granules, thereby regulating insulin secretion. Forms heteromultimeric ion channels with TRPM1 which are permeable for Ca(2+) and Zn(2+) ions. Exists as multiple splice variants which differ significantly in their biophysical properties. This Homo sapiens (Human) protein is Transient receptor potential cation channel subfamily M member 3.